The sequence spans 461 residues: Bifunctional protein GlmU (461 aa).

The interval 1–229 (MNKYVVILAA…FSESLGVNDR (229 aa)) is pyrophosphorylase. UDP-N-acetyl-alpha-D-glucosamine-binding positions include 8–11 (LAAG), Lys22, Gln72, and 77–78 (GT). Residue Asp102 coordinates Mg(2+). Gly139, Glu154, Asn169, and Asn227 together coordinate UDP-N-acetyl-alpha-D-glucosamine. Asn227 serves as a coordination point for Mg(2+). The linker stretch occupies residues 230 to 250 (IALAQATKIMQRRINEEHMKN). The interval 251–461 (GVSFIDPDTA…LPLSKDKEWE (211 aa)) is N-acetyltransferase. UDP-N-acetyl-alpha-D-glucosamine contacts are provided by Arg332 and Lys350. His362 acts as the Proton acceptor in catalysis. Residues Tyr365 and Asn376 each coordinate UDP-N-acetyl-alpha-D-glucosamine. Acetyl-CoA-binding positions include 385 to 386 (NY), Ala422, and Arg439.

In the N-terminal section; belongs to the N-acetylglucosamine-1-phosphate uridyltransferase family. This sequence in the C-terminal section; belongs to the transferase hexapeptide repeat family. In terms of assembly, homotrimer. Mg(2+) is required as a cofactor.

Its subcellular location is the cytoplasm. It catalyses the reaction alpha-D-glucosamine 1-phosphate + acetyl-CoA = N-acetyl-alpha-D-glucosamine 1-phosphate + CoA + H(+). It carries out the reaction N-acetyl-alpha-D-glucosamine 1-phosphate + UTP + H(+) = UDP-N-acetyl-alpha-D-glucosamine + diphosphate. It participates in nucleotide-sugar biosynthesis; UDP-N-acetyl-alpha-D-glucosamine biosynthesis; N-acetyl-alpha-D-glucosamine 1-phosphate from alpha-D-glucosamine 6-phosphate (route II): step 2/2. Its pathway is nucleotide-sugar biosynthesis; UDP-N-acetyl-alpha-D-glucosamine biosynthesis; UDP-N-acetyl-alpha-D-glucosamine from N-acetyl-alpha-D-glucosamine 1-phosphate: step 1/1. It functions in the pathway bacterial outer membrane biogenesis; LPS lipid A biosynthesis. Functionally, catalyzes the last two sequential reactions in the de novo biosynthetic pathway for UDP-N-acetylglucosamine (UDP-GlcNAc). The C-terminal domain catalyzes the transfer of acetyl group from acetyl coenzyme A to glucosamine-1-phosphate (GlcN-1-P) to produce N-acetylglucosamine-1-phosphate (GlcNAc-1-P), which is converted into UDP-GlcNAc by the transfer of uridine 5-monophosphate (from uridine 5-triphosphate), a reaction catalyzed by the N-terminal domain. The chain is Bifunctional protein GlmU from Lactobacillus gasseri (strain ATCC 33323 / DSM 20243 / BCRC 14619 / CIP 102991 / JCM 1131 / KCTC 3163 / NCIMB 11718 / NCTC 13722 / AM63).